The chain runs to 501 residues: Protein anon-37Cs (501 aa).

The protein localises to the cytoplasm. In terms of biological role, has a non-vital function. The sequence is that of Protein anon-37Cs (anon-37Cs) from Drosophila simulans (Fruit fly).